A 465-amino-acid chain; its full sequence is Probable glycine dehydrogenase (decarboxylating) subunit 1 (465 aa).

Belongs to the GcvP family. N-terminal subunit subfamily. In terms of assembly, the glycine cleavage system is composed of four proteins: P, T, L and H. In this organism, the P 'protein' is a heterodimer of two subunits.

It catalyses the reaction N(6)-[(R)-lipoyl]-L-lysyl-[glycine-cleavage complex H protein] + glycine + H(+) = N(6)-[(R)-S(8)-aminomethyldihydrolipoyl]-L-lysyl-[glycine-cleavage complex H protein] + CO2. In terms of biological role, the glycine cleavage system catalyzes the degradation of glycine. The P protein binds the alpha-amino group of glycine through its pyridoxal phosphate cofactor; CO(2) is released and the remaining methylamine moiety is then transferred to the lipoamide cofactor of the H protein. This chain is Probable glycine dehydrogenase (decarboxylating) subunit 1, found in Aeropyrum pernix (strain ATCC 700893 / DSM 11879 / JCM 9820 / NBRC 100138 / K1).